The sequence spans 594 residues: NADH-quinone oxidoreductase subunit C/D (594 aa).

Residues 1–185 (MTTGSALYIP…DPFSLNLAKQ (185 aa)) are NADH dehydrogenase I subunit C. The interval 209–594 (DYMFLNLGPN…IDFVMADVDR (386 aa)) is NADH dehydrogenase I subunit D.

It in the N-terminal section; belongs to the complex I 30 kDa subunit family. This sequence in the C-terminal section; belongs to the complex I 49 kDa subunit family. NDH-1 is composed of 13 different subunits. Subunits NuoB, CD, E, F, and G constitute the peripheral sector of the complex.

The protein localises to the cell inner membrane. The enzyme catalyses a quinone + NADH + 5 H(+)(in) = a quinol + NAD(+) + 4 H(+)(out). Functionally, NDH-1 shuttles electrons from NADH, via FMN and iron-sulfur (Fe-S) centers, to quinones in the respiratory chain. The immediate electron acceptor for the enzyme in this species is believed to be ubiquinone. Couples the redox reaction to proton translocation (for every two electrons transferred, four hydrogen ions are translocated across the cytoplasmic membrane), and thus conserves the redox energy in a proton gradient. This chain is NADH-quinone oxidoreductase subunit C/D, found in Pseudomonas fluorescens (strain SBW25).